The primary structure comprises 588 residues: Myc box-dependent-interacting protein 1 (588 aa).

Ala2 is subject to N-acetylalanine. Residues 2–122 (AEMGSKGVTA…DYHQKLVDQA (121 aa)) form an interaction with BIN2 region. Coiled coils occupy residues 15-42 (ASNVQKKLTRAQEKVLQKLGKADETKDE) and 193-274 (HLVA…EKQH). The BAR domain occupies 29-276 (VLQKLGKADE…LVSLEKQHGS (248 aa)). The tract at residues 279 to 355 (FTVKAQPSDS…PKHTPSKEMK (77 aa)) is disordered. Ser296, Ser298, and Ser304 each carry phosphoserine. A Phosphothreonine modification is found at Thr308. Phosphoserine occurs at positions 324 and 332. Residues 379–422 (FEAPGPFSEQASLLDLDFEPLPPVASPVKAPTPSGQSIPWDLWE) form a clathrin-binding region. The disordered stretch occupies residues 448–483 (PSQTAEPGPAQPAEASEVVGGTQEPGETAASEATSS). Residues 474–483 (ETAASEATSS) are compositionally biased toward low complexity. The 74-residue stretch at 515–588 (GFMFKVQAQH…FPENFTERVQ (74 aa)) folds into the SH3 domain.

In terms of assembly, heterodimer with AMPH. Binds SH3GLB1. Interacts (via SH3 domain) with DNM1. Interacts with SYNJ1. Interacts (via SH3 domain) with DNM2. Interacts with CLTC. Interacts with AP2A2. Interacts with AP2B1. Interacts with MYC (via N-terminal transactivation domain); the interaction requires the integrity of the conserved MYC box regions 1 and 2. Interacts with BIN2. Interacts with SNX4. Interacts (via BAR domain) with BACE1. Binds (via BAR domain) F-actin. Phosphorylated by protein kinase C. Highly expressed in the brain and muscle. Isoform AMPH2-1 is expressed only in the brain where it is concentrated in axon initial segments and nodes of Ranvier. Isoform AMPH2-2 is widely expressed.

The protein localises to the nucleus. Its subcellular location is the cytoplasm. It localises to the endosome. It is found in the cell membrane. The protein resides in the sarcolemma. The protein localises to the T-tubule. Functionally, is a key player in the control of plasma membrane curvature, and membrane shaping and remodeling. Required in muscle cells for the formation of T-tubules, tubular invaginations of the plasma membrane that function in depolarization-contraction coupling. Required in muscle cells for the formation of T-tubules, tubular invaginations of the plasma membrane that function in depolarization-contraction coupling. Is a negative regulator of endocytosis. Is also involved in the regulation of intracellular vesicles sorting, modulation of BACE1 trafficking and the control of amyloid-beta production. In neuronal circuits, endocytosis regulation may influence the internalization of PHF-tau aggregates. May be involved in the regulation of MYC activity and the control cell proliferation. This chain is Myc box-dependent-interacting protein 1 (Bin1), found in Rattus norvegicus (Rat).